The primary structure comprises 797 residues: Protocadherin beta-9 (797 aa).

The signal sequence occupies residues 1–26 (MKTRGFSFPRQRQVLFLFLFWGVSLA). At 27–690 (GSGFGRYSVT…AQADSLTVYL (664 aa)) the chain is on the extracellular side. 5 Cadherin domains span residues 35-133 (VTEE…SPVF), 138-242 (MVLK…APQF), 247-347 (YETQ…PPEL), 352-451 (LSNS…APAF), and 456-561 (YTLF…SPFV). Asn-169 carries N-linked (GlcNAc...) asparagine glycosylation. Asn-418 carries an N-linked (GlcNAc...) asparagine glycan. Asn-567 is a glycosylation site (N-linked (GlcNAc...) asparagine). A Cadherin 6 domain is found at 568–671 (GSAPCTELVP…LVDGFSQPYL (104 aa)). The chain crosses the membrane as a helical span at residues 691–711 (VVALASVSSLFLLSVLLFVAV). At 712–797 (RLCRRSRAAS…TLHNSFGFNY (86 aa)) the chain is on the cytoplasmic side.

The protein localises to the cell membrane. Potential calcium-dependent cell-adhesion protein. May be involved in the establishment and maintenance of specific neuronal connections in the brain. This chain is Protocadherin beta-9 (PCDHB9), found in Pan troglodytes (Chimpanzee).